The following is a 179-amino-acid chain: Small ribosomal subunit protein uS5 (179 aa).

The region spanning 22–85 (MIEKLVAVNR…EYARKTMANV (64 aa)) is the S5 DRBM domain.

Belongs to the universal ribosomal protein uS5 family. Part of the 30S ribosomal subunit. Contacts proteins S4 and S8.

Its function is as follows. With S4 and S12 plays an important role in translational accuracy. Located at the back of the 30S subunit body where it stabilizes the conformation of the head with respect to the body. This Xylella fastidiosa (strain 9a5c) protein is Small ribosomal subunit protein uS5.